A 468-amino-acid chain; its full sequence is Nuclear distribution protein PAC1-2 (468 aa).

The 33-residue stretch at Q13 to E45 folds into the LisH domain. Positions S66 to G92 form a coiled coil. WD repeat units follow at residues G118–K159, H161–R201, G205–T251, G254–R293, G298–L358, G360–Q399, M404–G429, and D430–N468.

Belongs to the WD repeat LIS1/nudF family. Self-associates. Interacts with NDL1 and dynein.

The protein resides in the cytoplasm. The protein localises to the cytoskeleton. It is found in the spindle pole. Functionally, positively regulates the activity of the minus-end directed microtubule motor protein dynein. May enhance dynein-mediated microtubule sliding by targeting dynein to the microtubule plus end. Required for nuclear migration during vegetative growth as well as development. Required for retrograde early endosome (EE) transport from the hyphal tip. Required for localization of dynein to the mitotic spindle poles. Recruits additional proteins to the dynein complex at SPBs. The protein is Nuclear distribution protein PAC1-2 of Podospora anserina (strain S / ATCC MYA-4624 / DSM 980 / FGSC 10383) (Pleurage anserina).